The following is a 229-amino-acid chain: uncharacterized protein (229 aa).

Positions 1-102 are disordered; that stretch reads MKLLGRKKSY…AASKAQITDR (102 aa). The segment covering 73–94 has biased composition (basic residues); it reads ARRKSLAPPKCHRAERRAKRAA. The next 2 membrane-spanning stretches (helical) occupy residues 137-157 and 159-179; these read LGLFTPSALVLLFITFGVPQL and LYMSPAMLVLLSVMGIDGIIL.

It localises to the cell membrane. This is an uncharacterized protein from Mycobacterium leprae (strain TN).